The following is a 56-amino-acid chain: Preprotein translocase subunit SecG (56 aa).

Topologically, residues 1–29 are cytoplasmic; that stretch reads MAKDKTTLPPTGAGLMRFFDEDTRAIKVS. Residues 30–51 form a helical membrane-spanning segment; that stretch reads PKGVIAIVLVLIAFEVFLHLFG. At 52–56 the chain is on the extracellular side; the sequence is PSIFG.

This sequence belongs to the SEC61-beta family. In terms of assembly, component of the protein translocase complex. Heterotrimer consisting of alpha (SecY), beta (SecG) and gamma (SecE) subunits. Can form oligomers of the heterotrimer.

It localises to the cell membrane. Functionally, involved in protein export. The function of the beta subunit is unknown, but it may be involved in stabilization of the trimeric complex. This Thermococcus gammatolerans (strain DSM 15229 / JCM 11827 / EJ3) protein is Preprotein translocase subunit SecG.